The primary structure comprises 491 residues: UDP-N-acetylmuramate--L-alanine ligase (491 aa).

126 to 132 (GTHGKTT) provides a ligand contact to ATP.

The protein belongs to the MurCDEF family.

The protein resides in the cytoplasm. The catalysed reaction is UDP-N-acetyl-alpha-D-muramate + L-alanine + ATP = UDP-N-acetyl-alpha-D-muramoyl-L-alanine + ADP + phosphate + H(+). It participates in cell wall biogenesis; peptidoglycan biosynthesis. Cell wall formation. The polypeptide is UDP-N-acetylmuramate--L-alanine ligase (Escherichia coli (strain SE11)).